The following is a 713-amino-acid chain: UvrABC system protein B (713 aa).

Residues 35-421 (RRIRAGEKDV…GDGFVEQIIR (387 aa)) enclose the Helicase ATP-binding domain. 48 to 55 (GATGTGKS) is a binding site for ATP. A Beta-hairpin motif is present at residues 101–124 (YYDYYQPEAYVPQSDTYIEKDSSI). The region spanning 438-604 (QIDDLVHEIR…PLRKKINDIV (167 aa)) is the Helicase C-terminal domain. Positions 624–663 (QAKDGKGAKAPVPSLGGKAAAKGAKSAKGKAKETVPTDRP) are disordered. Residues 639-649 (GGKAAAKGAKS) are compositionally biased toward low complexity. Positions 653-663 (KAKETVPTDRP) are enriched in basic and acidic residues. In terms of domain architecture, UVR spans 668 to 703 (AEEIEELTNRMRAAAADLQFEIAARLRDEVSEMKKE).

The protein belongs to the UvrB family. In terms of assembly, forms a heterotetramer with UvrA during the search for lesions. Interacts with UvrC in an incision complex.

It is found in the cytoplasm. Functionally, the UvrABC repair system catalyzes the recognition and processing of DNA lesions. A damage recognition complex composed of 2 UvrA and 2 UvrB subunits scans DNA for abnormalities. Upon binding of the UvrA(2)B(2) complex to a putative damaged site, the DNA wraps around one UvrB monomer. DNA wrap is dependent on ATP binding by UvrB and probably causes local melting of the DNA helix, facilitating insertion of UvrB beta-hairpin between the DNA strands. Then UvrB probes one DNA strand for the presence of a lesion. If a lesion is found the UvrA subunits dissociate and the UvrB-DNA preincision complex is formed. This complex is subsequently bound by UvrC and the second UvrB is released. If no lesion is found, the DNA wraps around the other UvrB subunit that will check the other stand for damage. In Streptomyces avermitilis (strain ATCC 31267 / DSM 46492 / JCM 5070 / NBRC 14893 / NCIMB 12804 / NRRL 8165 / MA-4680), this protein is UvrABC system protein B.